Here is a 647-residue protein sequence, read N- to C-terminus: LIM domain kinase 1 (647 aa).

2 LIM zinc-binding domains span residues 25 to 75 and 84 to 137; these read CASC…CKKD and CHGC…CGQC. Residues 165 to 258 form the PDZ domain; that stretch reads LVSIPASAHG…LLQLTLEHDP (94 aa). At Ser-210 the chain carries Phosphoserine. At Thr-229 the chain carries Phosphothreonine. The interval 256-316 is disordered; that stretch reads HDPHDSLGHG…SLVSPASQRK (61 aa). A compositionally biased stretch (polar residues) spans 278–289; the sequence is HTPSGQAGSSAR. Phosphoserine occurs at positions 298, 302, 307, and 310. Ser-323 bears the Phosphoserine; by MAPKAPK2 mark. A Phosphoserine modification is found at Ser-337. Residues 339-604 form the Protein kinase domain; that stretch reads LIHGEVLGKG…PSFVKLEQWL (266 aa). ATP contacts are provided by residues 345–353 and Lys-368; that span reads LGKGCFGQA. Asp-460 is a catalytic residue. Thr-508 bears the Phosphothreonine; by ROCK1 and PAK1 mark.

Belongs to the protein kinase superfamily. TKL Ser/Thr protein kinase family. In terms of assembly, interacts (via LIM domain) with the cytoplasmic domain of NRG1. Interacts with NISCH. Interacts with RLIM and RNF6. Self-associates to form homodimers. Interacts with HSP90AA1; this interaction promotes LIMK1 dimerization and subsequent transphosphorylation. Interacts with CDKN1C. Interacts with SSH1. Interacts with ROCK1. Interacts (via LIM zinc-binding domains) with FAM89B/LRAP25 (via LRR repeat). Forms a tripartite complex with CDC42BPA, CDC42BPB and FAM89B/LRAP25. Autophosphorylated. Phosphorylated on Thr-508 by ROCK1 and PAK1, resulting in activation. Phosphorylated by PAK4 which increases the ability of LIMK1 to phosphorylate cofilin. Phosphorylated at Ser-323 by MAPKAPK2 during activation of VEGFA-induced signaling, which results in activation of LIMK1 and promotion of actin reorganization, cell migration, and tubule formation of endothelial cells. Dephosphorylated and inactivated by SSH1. Phosphorylated by CDC42BP. Post-translationally, ubiquitinated. 'Lys-48'-linked polyubiquitination by RNF6 leads to proteasomal degradation through the 26S proteasome, modulating LIMK1 levels in the growth cone and its effect on axonal outgrowth. Also polyubiquitinated by RLIM.

It localises to the cytoplasm. The protein localises to the nucleus. The protein resides in the cytoskeleton. It is found in the cell projection. Its subcellular location is the lamellipodium. The catalysed reaction is L-seryl-[protein] + ATP = O-phospho-L-seryl-[protein] + ADP + H(+). It catalyses the reaction L-threonyl-[protein] + ATP = O-phospho-L-threonyl-[protein] + ADP + H(+). Its function is as follows. Serine/threonine-protein kinase that plays an essential role in the regulation of actin filament dynamics. Acts downstream of several Rho family GTPase signal transduction pathways. Activated by upstream kinases including ROCK1, PAK1 and PAK4, which phosphorylate LIMK1 on a threonine residue located in its activation loop. LIMK1 subsequently phosphorylates and inactivates the actin binding/depolymerizing factors cofilin-1/CFL1, cofilin-2/CFL2 and destrin/DSTN, thereby preventing the cleavage of filamentous actin (F-actin), and stabilizing the actin cytoskeleton. In this way LIMK1 regulates several actin-dependent biological processes including cell motility, cell cycle progression, and differentiation. Phosphorylates TPPP on serine residues, thereby promoting microtubule disassembly. Stimulates axonal outgrowth and may be involved in brain development. The chain is LIM domain kinase 1 (Limk1) from Rattus norvegicus (Rat).